A 449-amino-acid chain; its full sequence is Glucose-6-phosphate isomerase (449 aa).

Residue Glu-291 is the Proton donor of the active site. Catalysis depends on residues His-312 and Lys-426.

This sequence belongs to the GPI family.

It is found in the cytoplasm. The enzyme catalyses alpha-D-glucose 6-phosphate = beta-D-fructose 6-phosphate. It participates in carbohydrate biosynthesis; gluconeogenesis. The protein operates within carbohydrate degradation; glycolysis; D-glyceraldehyde 3-phosphate and glycerone phosphate from D-glucose: step 2/4. Functionally, catalyzes the reversible isomerization of glucose-6-phosphate to fructose-6-phosphate. The polypeptide is Glucose-6-phosphate isomerase (Pediococcus pentosaceus (strain ATCC 25745 / CCUG 21536 / LMG 10740 / 183-1w)).